The primary structure comprises 685 residues: DNA ligase (685 aa).

Residues 47 to 51, 96 to 97, and glutamate 125 contribute to the NAD(+) site; these read DSEYD and SL. Residue lysine 127 is the N6-AMP-lysine intermediate of the active site. The NAD(+) site is built by arginine 148, glutamate 185, lysine 304, and lysine 328. 4 residues coordinate Zn(2+): cysteine 422, cysteine 425, cysteine 440, and cysteine 446. The BRCT domain occupies 605–685; it reads ADAQPLKGQT…ALLALFAANR (81 aa).

The protein belongs to the NAD-dependent DNA ligase family. LigA subfamily. Mg(2+) is required as a cofactor. Mn(2+) serves as cofactor.

The enzyme catalyses NAD(+) + (deoxyribonucleotide)n-3'-hydroxyl + 5'-phospho-(deoxyribonucleotide)m = (deoxyribonucleotide)n+m + AMP + beta-nicotinamide D-nucleotide.. Functionally, DNA ligase that catalyzes the formation of phosphodiester linkages between 5'-phosphoryl and 3'-hydroxyl groups in double-stranded DNA using NAD as a coenzyme and as the energy source for the reaction. It is essential for DNA replication and repair of damaged DNA. This chain is DNA ligase, found in Shewanella sp. (strain W3-18-1).